The following is a 424-amino-acid chain: Glutamyl-tRNA reductase (424 aa).

Substrate is bound by residues 50 to 53 (TCNR), Ser-98, 103 to 105 (EDQ), and Gln-109. Cys-51 acts as the Nucleophile in catalysis. Residue 178–183 (GSGEMG) participates in NADP(+) binding.

It belongs to the glutamyl-tRNA reductase family. In terms of assembly, homodimer.

It carries out the reaction (S)-4-amino-5-oxopentanoate + tRNA(Glu) + NADP(+) = L-glutamyl-tRNA(Glu) + NADPH + H(+). It participates in porphyrin-containing compound metabolism; protoporphyrin-IX biosynthesis; 5-aminolevulinate from L-glutamyl-tRNA(Glu): step 1/2. Catalyzes the NADPH-dependent reduction of glutamyl-tRNA(Glu) to glutamate 1-semialdehyde (GSA). The protein is Glutamyl-tRNA reductase of Methanoregula boonei (strain DSM 21154 / JCM 14090 / 6A8).